Consider the following 447-residue polypeptide: Serine/threonine-protein phosphatase 2A 55 kDa regulatory subunit B gamma isoform (447 aa).

WD repeat units follow at residues 22-61, 87-128, 171-209, 220-260, 279-317, 334-375, and 410-446; these read TPAD…KNAP, EIEE…KRPE, GHTY…RSFN, DLTE…LCDK, EIIS…RPIE, ENDC…DVTL, and DFTK…NSDM.

This sequence belongs to the phosphatase 2A regulatory subunit B family. As to quaternary structure, PP2A consists of a common heterodimeric core enzyme, composed of a 36 kDa catalytic subunit (subunit C) and a 65 kDa constant regulatory subunit (PR65 or subunit A), that associates with a variety of regulatory subunits. Proteins that associate with the core dimer include three families of regulatory subunits B (the R2/B/PR55/B55, R3/B''/PR72/PR130/PR59 and R5/B'/B56 families), the 48 kDa variable regulatory subunit, viral proteins, and cell signaling molecules. Interacts with IER5.

Its function is as follows. The B regulatory subunit might modulate substrate selectivity and catalytic activity, and might also direct the localization of the catalytic enzyme to a particular subcellular compartment. In Macaca fascicularis (Crab-eating macaque), this protein is Serine/threonine-protein phosphatase 2A 55 kDa regulatory subunit B gamma isoform (PPP2R2C).